The chain runs to 415 residues: tRNA(Ile)-lysidine synthase (415 aa).

36 to 41 (SGGRDS) is a binding site for ATP.

This sequence belongs to the tRNA(Ile)-lysidine synthase family.

Its subcellular location is the cytoplasm. It carries out the reaction cytidine(34) in tRNA(Ile2) + L-lysine + ATP = lysidine(34) in tRNA(Ile2) + AMP + diphosphate + H(+). Its function is as follows. Ligates lysine onto the cytidine present at position 34 of the AUA codon-specific tRNA(Ile) that contains the anticodon CAU, in an ATP-dependent manner. Cytidine is converted to lysidine, thus changing the amino acid specificity of the tRNA from methionine to isoleucine. The protein is tRNA(Ile)-lysidine synthase of Tropheryma whipplei (strain Twist) (Whipple's bacillus).